The chain runs to 331 residues: UDP-N-acetylenolpyruvoylglucosamine reductase (331 aa).

The region spanning 54–221 (RVGGAAELYV…TQATFQLQPG (168 aa)) is the FAD-binding PCMH-type domain. The active site involves R200. Residue S251 is the Proton donor of the active site. Residue E321 is part of the active site.

This sequence belongs to the MurB family. The cofactor is FAD.

The protein resides in the cytoplasm. The enzyme catalyses UDP-N-acetyl-alpha-D-muramate + NADP(+) = UDP-N-acetyl-3-O-(1-carboxyvinyl)-alpha-D-glucosamine + NADPH + H(+). Its pathway is cell wall biogenesis; peptidoglycan biosynthesis. Cell wall formation. The polypeptide is UDP-N-acetylenolpyruvoylglucosamine reductase (Nostoc sp. (strain PCC 7120 / SAG 25.82 / UTEX 2576)).